The following is a 116-amino-acid chain: uncharacterized protein (116 aa).

A helical membrane pass occupies residues 52-72 (VFCSANSVPLYLLLLTSALHF).

The protein resides in the mitochondrion membrane. This is an uncharacterized protein from Arabidopsis thaliana (Mouse-ear cress).